Here is a 482-residue protein sequence, read N- to C-terminus: Aspartyl/glutamyl-tRNA(Asn/Gln) amidotransferase subunit B (482 aa).

It belongs to the GatB/GatE family. GatB subfamily. Heterotrimer of A, B and C subunits.

It catalyses the reaction L-glutamyl-tRNA(Gln) + L-glutamine + ATP + H2O = L-glutaminyl-tRNA(Gln) + L-glutamate + ADP + phosphate + H(+). It carries out the reaction L-aspartyl-tRNA(Asn) + L-glutamine + ATP + H2O = L-asparaginyl-tRNA(Asn) + L-glutamate + ADP + phosphate + 2 H(+). Its function is as follows. Allows the formation of correctly charged Asn-tRNA(Asn) or Gln-tRNA(Gln) through the transamidation of misacylated Asp-tRNA(Asn) or Glu-tRNA(Gln) in organisms which lack either or both of asparaginyl-tRNA or glutaminyl-tRNA synthetases. The reaction takes place in the presence of glutamine and ATP through an activated phospho-Asp-tRNA(Asn) or phospho-Glu-tRNA(Gln). The polypeptide is Aspartyl/glutamyl-tRNA(Asn/Gln) amidotransferase subunit B (Thermotoga petrophila (strain ATCC BAA-488 / DSM 13995 / JCM 10881 / RKU-1)).